Here is an 808-residue protein sequence, read N- to C-terminus: uncharacterized protein (808 aa).

An EF-hand 1 domain is found at 6-41; that stretch reads SRSEKVKRIFQQFDGNHDGGLNREEMAALVVAVNPR. 7 TPR repeats span residues 234–267, 269–301, 310–343, 344–377, 378–411, 412–445, and 447–479; these read FDGHMAIGRVLYEHQLFKEALVSFKRACELQPTD, RPHFKAGNCLYVLGKCKESKDEFLLALEAAESG, PQIYVNLGIALEGEGMVLSACEYYREAAILCPTH, FRALKLLGSALFGVGEYRAAVKALEEAIYLKPDY, ADAHCDLASSLHSMGEDERAIEVFQRAIDLKPGH, VDALYNLGGLYMDLGRFQRASEMYTRVLTVWPNH, and RAQLNKAVSLLGAGETEEAKRALKEALKLTNRV. The EF-hand 2 domain occupies 600-635; it reads AIKAINEKILALLDDSGSGRVDMGMFYAVIAPLCGG. A coiled-coil region spans residues 773-794; sequence FKQEEYKFREYESEAEAMKAKC.

This is an uncharacterized protein from Arabidopsis thaliana (Mouse-ear cress).